The chain runs to 368 residues: Glutamate 5-kinase (368 aa).

Residue K9 coordinates ATP. Positions 49, 136, and 148 each coordinate substrate. ATP is bound by residues 168-169 and 210-216; these read TD and TGGMMTK. The PUA domain occupies 275–353; sequence AGIITIDNGA…ADIENVLGYE (79 aa).

This sequence belongs to the glutamate 5-kinase family.

Its subcellular location is the cytoplasm. It carries out the reaction L-glutamate + ATP = L-glutamyl 5-phosphate + ADP. Its pathway is amino-acid biosynthesis; L-proline biosynthesis; L-glutamate 5-semialdehyde from L-glutamate: step 1/2. Functionally, catalyzes the transfer of a phosphate group to glutamate to form L-glutamate 5-phosphate. This chain is Glutamate 5-kinase, found in Haemophilus influenzae (strain PittGG).